A 543-amino-acid polypeptide reads, in one-letter code: MATSLSADSPQQLSSLSTQQTILLLLVSVLAIVHLGQWLLRQWRRKPWSSPPGPFPWPLIGNAASVGRASHLYFARLARRYGDVFQIRLGSCPVVVLNGESAIHQALVQQGGVFADRPPFASFRVVSGGRSLAFGHYSERWKERRRAAYGTMRAFSTRHPRSRGLLEGHALGEARELVAVLVRRCAGGACLDPTQPIIVAVANVMSAVCFGCRYNHDDAEFLELLSHNEEFGRTVGAGSLVDVMPWLQLFPNPVRTIFREFEQINRNFSNFVLDKFLRHRESLVPGAAPRDMMDAFILSAEKKATGDPGDSPSGLDLEDVPATITDIFGASQDTLSTALLWLLILFTRYPDVQARVQAELDQVVGRDRLPCMSDQPNLPYVMAFLYESMRFTSFLPVTLPHATTANTFVLGYYIPKNTVVFVNQWSVNHDPAKWSNPEDFDPARFLDKDGFINKALASSVMIFSVGKRRCIGEELSKTLLFLFISILAHQCNFKANQNEPSNMSFSYGLSIKPKSFKIHVSLRESMKLLDSAVEKLQAEEACQ.

C470 serves as a coordination point for heme.

This sequence belongs to the cytochrome P450 family. It depends on heme as a cofactor.

The protein localises to the endoplasmic reticulum membrane. It localises to the microsome membrane. The protein resides in the mitochondrion. It catalyses the reaction an organic molecule + reduced [NADPH--hemoprotein reductase] + O2 = an alcohol + oxidized [NADPH--hemoprotein reductase] + H2O + H(+). The catalysed reaction is 17beta-estradiol + reduced [NADPH--hemoprotein reductase] + O2 = 2-hydroxy-17beta-estradiol + oxidized [NADPH--hemoprotein reductase] + H2O + H(+). The enzyme catalyses 17beta-estradiol + reduced [NADPH--hemoprotein reductase] + O2 = 4-hydroxy-17beta-estradiol + oxidized [NADPH--hemoprotein reductase] + H2O + H(+). It carries out the reaction estrone + reduced [NADPH--hemoprotein reductase] + O2 = 2-hydroxyestrone + oxidized [NADPH--hemoprotein reductase] + H2O + H(+). It catalyses the reaction estrone + reduced [NADPH--hemoprotein reductase] + O2 = 4-hydroxyestrone + oxidized [NADPH--hemoprotein reductase] + H2O + H(+). The catalysed reaction is testosterone + reduced [NADPH--hemoprotein reductase] + O2 = 6beta,17beta-dihydroxyandrost-4-en-3-one + oxidized [NADPH--hemoprotein reductase] + H2O + H(+). The enzyme catalyses progesterone + reduced [NADPH--hemoprotein reductase] + O2 = 6beta-hydroxyprogesterone + oxidized [NADPH--hemoprotein reductase] + H2O + H(+). It carries out the reaction progesterone + reduced [NADPH--hemoprotein reductase] + O2 = 16alpha-hydroxyprogesterone + oxidized [NADPH--hemoprotein reductase] + H2O + H(+). It catalyses the reaction all-trans-retinol + reduced [NADPH--hemoprotein reductase] + O2 = all-trans-retinal + oxidized [NADPH--hemoprotein reductase] + 2 H2O + H(+). The catalysed reaction is all-trans-retinal + reduced [NADPH--hemoprotein reductase] + O2 = all-trans-retinoate + oxidized [NADPH--hemoprotein reductase] + H2O + 2 H(+). The enzyme catalyses (5Z,8Z,11Z,14Z)-eicosatetraenoate + reduced [NADPH--hemoprotein reductase] + O2 = (8R,9S)-epoxy-(5Z,11Z,14Z)-eicosatrienoate + oxidized [NADPH--hemoprotein reductase] + H2O + H(+). It carries out the reaction (5Z,8Z,11Z,14Z)-eicosatetraenoate + reduced [NADPH--hemoprotein reductase] + O2 = (11R,12S)-epoxy-(5Z,8Z,14Z)-eicosatrienoate + oxidized [NADPH--hemoprotein reductase] + H2O + H(+). It catalyses the reaction (5Z,8Z,11Z,14Z)-eicosatetraenoate + reduced [NADPH--hemoprotein reductase] + O2 = (11S,12R)-epoxy-(5Z,8Z,14Z)-eicosatrienoate + oxidized [NADPH--hemoprotein reductase] + H2O + H(+). The catalysed reaction is (5Z,8Z,11Z,14Z)-eicosatetraenoate + reduced [NADPH--hemoprotein reductase] + O2 = (14S,15R)-epoxy-(5Z,8Z,11Z)-eicosatrienoate + oxidized [NADPH--hemoprotein reductase] + H2O + H(+). The enzyme catalyses (5Z,8Z,11Z,14Z)-eicosatetraenoate + reduced [NADPH--hemoprotein reductase] + O2 = (14R,15S)-epoxy-(5Z,8Z,11Z)-eicosatrienoate + oxidized [NADPH--hemoprotein reductase] + H2O + H(+). It carries out the reaction (5S)-hydroperoxy-(6E,8Z,11Z,14Z)-eicosatetraenoate = 5-oxo-(6E,8Z,11Z,14Z)-eicosatetraenoate + H2O. It catalyses the reaction (12S)-hydroperoxy-(5Z,8Z,10E,14Z)-eicosatetraenoate = 12-oxo-(5Z,8Z,10E,14Z)-eicosatetraenoate + H2O. The catalysed reaction is (15S)-hydroperoxy-(5Z,8Z,11Z,13E)-eicosatetraenoate = 15-oxo-(5Z,8Z,11Z,13E)-eicosatetraenoate + H2O. The enzyme catalyses (13S)-hydroperoxy-(9Z,11E)-octadecadienoate = 13-oxo-(9Z,11E)-octadecadienoate + H2O. It participates in steroid hormone biosynthesis. It functions in the pathway cofactor metabolism; retinol metabolism. Its pathway is lipid metabolism; arachidonate metabolism. With respect to regulation, enzyme activity is increased by cytochrome b5. Enzyme activity is increased by liposomes containing anionic phospholipids, phosphatidic acid and cardiolipin. Inhibited by naringenin with an IC(50) of 5 uM. Functionally, a cytochrome P450 monooxygenase involved in the metabolism of various endogenous substrates, including fatty acids, steroid hormones and vitamins. Mechanistically, uses molecular oxygen inserting one oxygen atom into a substrate, and reducing the second into a water molecule, with two electrons provided by NADPH via cytochrome P450 reductase (NADPH--hemoprotein reductase). Exhibits catalytic activity for the formation of hydroxyestrogens from 17beta-estradiol (E2), namely 2- and 4-hydroxy E2. Metabolizes testosterone and progesterone to B or D ring hydroxylated metabolites. May act as a major enzyme for all-trans retinoic acid biosynthesis in extrahepatic tissues. Catalyzes two successive oxidative transformation of all-trans retinol to all-trans retinal and then to the active form all-trans retinoic acid. Catalyzes the epoxidation of double bonds of certain PUFA. Converts arachidonic acid toward epoxyeicosatrienoic acid (EpETrE) regioisomers, 8,9-, 11,12-, and 14,15- EpETrE, that function as lipid mediators in the vascular system. Additionally, displays dehydratase activity toward oxygenated eicosanoids including hydroperoxyeicosatetraenoates (HpETEs). This activity is independent of cytochrome P450 reductase, NADPH, and O2. Also involved in the oxidative metabolism of xenobiotics, particularly converting polycyclic aromatic hydrocarbons and heterocyclic aryl amines procarcinogens to DNA-damaging products. Plays an important role in retinal vascular development. Under ambient/hyperoxic O2 conditions, promotes angiogenesis and capillary morphogenesis of retinal endothelial cells and pericytes, likely by metabolizing the oxygenated products symptomatic of oxidative stress. Also, contributes to oxidative homeostasis and ultrastructural organization and function of trabecular meshwork tissue through modulation of POSTN expression. This chain is Cytochrome P450 1B1, found in Rattus norvegicus (Rat).